The following is a 552-amino-acid chain: HTH-type transcriptional regulator SgrR (552 aa).

The HTH marR-type domain maps to 1 to 116 (MPSARLQQQF…LVSHLGRSFR (116 aa)). Residues 26–49 (LNELAALLSCSRRHMRTLLNTMQD) constitute a DNA-binding region (H-T-H motif). The solute-binding stretch occupies residues 163–492 (ELEADIAHHW…IDWQADAARW (330 aa)).

Functionally, activates the small RNA gene sgrS under glucose-phosphate stress conditions as well as yfdZ. Represses its own transcription under both stress and non-stress conditions. Might act as a sensor of the intracellular accumulation of phosphoglucose by binding these molecules in its C-terminal solute-binding domain. In Shigella dysenteriae serotype 1 (strain Sd197), this protein is HTH-type transcriptional regulator SgrR.